The chain runs to 484 residues: TPR repeat-containing protein YvcD (484 aa).

TPR repeat units lie at residues 21 to 54 (GQYFFHKGLKAYKERNLKRASKLIQRAVHLEPED), 55 to 88 (SEMLSQLAVIYSEMGQYQESNDLLDYIMANLEAE), and 187 to 220 (WSAYNNLALAYFYSGNVVKAKQTAYEVLSHNEGN).

The protein is TPR repeat-containing protein YvcD (yvcD) of Bacillus subtilis (strain 168).